The chain runs to 203 residues: Guanylate kinase (203 aa).

The 179-residue stretch at 3–181 (GTLYIVAAPS…AVAEMCAIFT (179 aa)) folds into the Guanylate kinase-like domain. 10-17 (APSGAGKS) contacts ATP.

It belongs to the guanylate kinase family.

It is found in the cytoplasm. The catalysed reaction is GMP + ATP = GDP + ADP. Essential for recycling GMP and indirectly, cGMP. This Xanthomonas euvesicatoria pv. vesicatoria (strain 85-10) (Xanthomonas campestris pv. vesicatoria) protein is Guanylate kinase.